Consider the following 621-residue polypeptide: Hemolysin ahh1 (621 aa).

An N-terminal signal peptide occupies residues 1–30; that stretch reads MKNKKPRKFITQAPTLSLLALALLAGSVQA. Positions 491 to 610 constitute a Ricin B-type lectin domain; it reads RPVNLQLGGF…QNVSVRTLTS (120 aa).

This sequence belongs to the HlyA hemolysin family.

Functionally, bacterial hemolysins are exotoxins that attack blood cell membranes and cause cell rupture by mechanisms not clearly defined. This chain is Hemolysin ahh1 (ahh1), found in Aeromonas hydrophila subsp. hydrophila (strain ATCC 7966 / DSM 30187 / BCRC 13018 / CCUG 14551 / JCM 1027 / KCTC 2358 / NCIMB 9240 / NCTC 8049).